A 185-amino-acid chain; its full sequence is Ribosome-recycling factor (185 aa).

It belongs to the RRF family.

It is found in the cytoplasm. Responsible for the release of ribosomes from messenger RNA at the termination of protein biosynthesis. May increase the efficiency of translation by recycling ribosomes from one round of translation to another. In Streptococcus agalactiae serotype V (strain ATCC BAA-611 / 2603 V/R), this protein is Ribosome-recycling factor.